The chain runs to 215 residues: Large ribosomal subunit protein uL4 (215 aa).

The segment at 46–76 is disordered; it reads TAKSKNRAEVSGGGRKPWAQKGGGRARAGSI. The span at 56–71 shows a compositional bias: gly residues; the sequence is SGGGRKPWAQKGGGRA.

This sequence belongs to the universal ribosomal protein uL4 family. In terms of assembly, part of the 50S ribosomal subunit.

In terms of biological role, one of the primary rRNA binding proteins, this protein initially binds near the 5'-end of the 23S rRNA. It is important during the early stages of 50S assembly. It makes multiple contacts with different domains of the 23S rRNA in the assembled 50S subunit and ribosome. Forms part of the polypeptide exit tunnel. This Helicobacter acinonychis (strain Sheeba) protein is Large ribosomal subunit protein uL4.